Here is a 518-residue protein sequence, read N- to C-terminus: Bifunctional purine biosynthesis protein PurH (518 aa).

The region spanning 1–144 is the MGS-like domain; that stretch reads MSKRALISVS…KNHASVTVVC (144 aa).

It belongs to the PurH family.

It catalyses the reaction (6R)-10-formyltetrahydrofolate + 5-amino-1-(5-phospho-beta-D-ribosyl)imidazole-4-carboxamide = 5-formamido-1-(5-phospho-D-ribosyl)imidazole-4-carboxamide + (6S)-5,6,7,8-tetrahydrofolate. The enzyme catalyses IMP + H2O = 5-formamido-1-(5-phospho-D-ribosyl)imidazole-4-carboxamide. The protein operates within purine metabolism; IMP biosynthesis via de novo pathway; 5-formamido-1-(5-phospho-D-ribosyl)imidazole-4-carboxamide from 5-amino-1-(5-phospho-D-ribosyl)imidazole-4-carboxamide (10-formyl THF route): step 1/1. It participates in purine metabolism; IMP biosynthesis via de novo pathway; IMP from 5-formamido-1-(5-phospho-D-ribosyl)imidazole-4-carboxamide: step 1/1. This chain is Bifunctional purine biosynthesis protein PurH, found in Lactococcus lactis subsp. lactis (strain IL1403) (Streptococcus lactis).